A 460-amino-acid polypeptide reads, in one-letter code: Nitrilase and fragile histidine triad fusion protein NitFhit (460 aa).

The region spanning 33–279 is the CN hydrolase domain; it reads ATIAVGQMRS…LDIGTAEVDL (247 aa). Active-site residues include Glu-72, Lys-142, and Cys-183. In terms of domain architecture, HIT spans 315–422; sequence DRPFATNIVD…MPRRLGDFGH (108 aa). The Histidine triad motif motif lies at 407 to 411; sequence HVHFH. Catalysis depends on His-409, which acts as the Tele-AMP-histidine intermediate.

In the N-terminal section; belongs to the UPF0012 family. In terms of assembly, homotetramer. Mn(2+) is required as a cofactor.

The enzyme catalyses P(1),P(3)-bis(5'-adenosyl) triphosphate + H2O = AMP + ADP + 2 H(+). In terms of biological role, cleaves A-5'-PPP-5'A to yield AMP and ADP. The chain is Nitrilase and fragile histidine triad fusion protein NitFhit from Drosophila melanogaster (Fruit fly).